Here is a 653-residue protein sequence, read N- to C-terminus: J protein JJJ2 (653 aa).

Residues 14-78 (TLYSVLNLKY…KEKMKYDSKL (65 aa)) form the J domain. Disordered stretches follow at residues 85 to 308 (DYSP…SSTE) and 490 to 512 (VSPK…EENL). Polar residues-rich tracts occupy residues 161-171 (NAKSYQNSKKS) and 187-200 (ATSF…SSSV). Residues 213-241 (SGSAVGSESRISSSGSESSSNVNSATGSS) show a composition bias toward low complexity. Residues 298–308 (PVKTTPNSSTE) are compositionally biased toward polar residues.

Its subcellular location is the cytoplasm. It localises to the nucleus. The sequence is that of J protein JJJ2 (JJJ2) from Kluyveromyces lactis (strain ATCC 8585 / CBS 2359 / DSM 70799 / NBRC 1267 / NRRL Y-1140 / WM37) (Yeast).